The chain runs to 486 residues: UDP-N-acetylmuramoyl-L-alanyl-D-glutamate--2,6-diaminopimelate ligase (486 aa).

Residue serine 30 coordinates UDP-N-acetyl-alpha-D-muramoyl-L-alanyl-D-glutamate. Residue 112-118 (GTNGKTT) participates in ATP binding. UDP-N-acetyl-alpha-D-muramoyl-L-alanyl-D-glutamate is bound by residues 154–155 (TT), serine 181, glutamine 187, and arginine 189. The residue at position 221 (lysine 221) is an N6-carboxylysine. Meso-2,6-diaminopimelate-binding positions include arginine 378, 402–405 (DNPR), glycine 455, and glutamate 459. A Meso-diaminopimelate recognition motif motif is present at residues 402–405 (DNPR).

This sequence belongs to the MurCDEF family. MurE subfamily. The cofactor is Mg(2+). In terms of processing, carboxylation is probably crucial for Mg(2+) binding and, consequently, for the gamma-phosphate positioning of ATP.

It is found in the cytoplasm. It carries out the reaction UDP-N-acetyl-alpha-D-muramoyl-L-alanyl-D-glutamate + meso-2,6-diaminopimelate + ATP = UDP-N-acetyl-alpha-D-muramoyl-L-alanyl-gamma-D-glutamyl-meso-2,6-diaminopimelate + ADP + phosphate + H(+). The protein operates within cell wall biogenesis; peptidoglycan biosynthesis. Catalyzes the addition of meso-diaminopimelic acid to the nucleotide precursor UDP-N-acetylmuramoyl-L-alanyl-D-glutamate (UMAG) in the biosynthesis of bacterial cell-wall peptidoglycan. This chain is UDP-N-acetylmuramoyl-L-alanyl-D-glutamate--2,6-diaminopimelate ligase, found in Cytophaga hutchinsonii (strain ATCC 33406 / DSM 1761 / CIP 103989 / NBRC 15051 / NCIMB 9469 / D465).